The sequence spans 243 residues: MGRGPSIEARKNASDAKRGKIFTKIIREIGVAARGGGGDPNNNPRLRVAVDKGLAVNMSKDVIERAIKKATGELEGVDYEEIRYEGYAPGGVAVIVDCLTDNRVRTVADVRHAFSKCGGNMGTEGSVAFMFKRLGVLSFAPGADEEAITEAAIEAGADDIVVYPDDGSIDVVTSPDAFSAVKDAMAAAGHVADHAEITFRADNDIKVEGEVALQVKKLLDMLEDLDDVQDVYSNAELGADAYA.

This sequence belongs to the TACO1 family.

The protein localises to the cytoplasm. In Stenotrophomonas maltophilia (strain K279a), this protein is Probable transcriptional regulatory protein Smlt3713.